Here is a 295-residue protein sequence, read N- to C-terminus: Bifunctional protein FolD (295 aa).

Residues 166-168, serine 195, and isoleucine 236 each bind NADP(+); that span reads GRS.

It belongs to the tetrahydrofolate dehydrogenase/cyclohydrolase family. As to quaternary structure, homodimer.

It catalyses the reaction (6R)-5,10-methylene-5,6,7,8-tetrahydrofolate + NADP(+) = (6R)-5,10-methenyltetrahydrofolate + NADPH. The catalysed reaction is (6R)-5,10-methenyltetrahydrofolate + H2O = (6R)-10-formyltetrahydrofolate + H(+). It functions in the pathway one-carbon metabolism; tetrahydrofolate interconversion. Its function is as follows. Catalyzes the oxidation of 5,10-methylenetetrahydrofolate to 5,10-methenyltetrahydrofolate and then the hydrolysis of 5,10-methenyltetrahydrofolate to 10-formyltetrahydrofolate. This chain is Bifunctional protein FolD, found in Prosthecochloris aestuarii (strain DSM 271 / SK 413).